A 273-amino-acid chain; its full sequence is Putative methyltransferase Cher3 (273 aa).

Positions 1–273 (MTSERNTDIE…VKPQRIFRKS (273 aa)) constitute a CheR-type methyltransferase domain. Residues Ser-76, Arg-80, Glu-114, Asp-137, 199-200 (SL), and 215-216 (RN) contribute to the S-adenosyl-L-methionine site.

The sequence is that of Putative methyltransferase Cher3 (cheR3) from Pseudomonas putida (strain ATCC 47054 / DSM 6125 / CFBP 8728 / NCIMB 11950 / KT2440).